A 282-amino-acid chain; its full sequence is Exo-glucosaminidase LytG (282 aa).

Positions 1–29 (MARKKLKKRKLLISLFFLVSIPLALFVLA) are cleaved as a signal peptide. In terms of domain architecture, GW spans 203-281 (SLKSVDLNAS…DDSAVEIKEA (79 aa)).

It belongs to the glycosyl hydrolase 73 family. It depends on Mg(2+) as a cofactor.

The protein resides in the secreted. It localises to the cell wall. With respect to regulation, inhibited by EDTA. Functionally, is the major glucosaminidase responsible for peptidoglycan structural determination during vegetative growth. Catalyzes the hydrolysis of 1,4-beta-linkages between N-acetyl-D-glucosamine and N-acetylmuramic acid residues in peptidoglycan. Acts processively from the ends of the glycan strands. Also plays a role in motility, chemotaxis and cell division. The chain is Exo-glucosaminidase LytG (lytG) from Bacillus subtilis (strain 168).